The primary structure comprises 365 residues: Chorismate synthase (365 aa).

NADP(+) is bound at residue arginine 48. FMN is bound by residues arginine 130 to serine 132, asparagine 242 to alanine 243, glycine 290, lysine 305 to serine 309, and arginine 331.

This sequence belongs to the chorismate synthase family. In terms of assembly, homotetramer. Requires FMNH2 as cofactor.

It carries out the reaction 5-O-(1-carboxyvinyl)-3-phosphoshikimate = chorismate + phosphate. Its pathway is metabolic intermediate biosynthesis; chorismate biosynthesis; chorismate from D-erythrose 4-phosphate and phosphoenolpyruvate: step 7/7. Its function is as follows. Catalyzes the anti-1,4-elimination of the C-3 phosphate and the C-6 proR hydrogen from 5-enolpyruvylshikimate-3-phosphate (EPSP) to yield chorismate, which is the branch point compound that serves as the starting substrate for the three terminal pathways of aromatic amino acid biosynthesis. This reaction introduces a second double bond into the aromatic ring system. The sequence is that of Chorismate synthase from Erythrobacter litoralis (strain HTCC2594).